The sequence spans 869 residues: Leucine--tRNA ligase (869 aa).

The 'HIGH' region signature appears at P42 to H52. The 'KMSKS' region motif lies at T624–S628. K627 contributes to the ATP binding site.

Belongs to the class-I aminoacyl-tRNA synthetase family.

It localises to the cytoplasm. It catalyses the reaction tRNA(Leu) + L-leucine + ATP = L-leucyl-tRNA(Leu) + AMP + diphosphate. The protein is Leucine--tRNA ligase of Nitrosomonas europaea (strain ATCC 19718 / CIP 103999 / KCTC 2705 / NBRC 14298).